The sequence spans 414 residues: Cytochrome P450 CYP105Q4 (414 aa).

Residues 1 to 12 (MSDTLASPSPET) show a composition bias toward polar residues. The disordered stretch occupies residues 1 to 21 (MSDTLASPSPETASGIPDYPM). 5 residues coordinate heme: His108, Gln302, Arg304, His361, and Cys363.

Belongs to the cytochrome P450 family. Heme is required as a cofactor.

Functionally, can bind oleic-acid derivatives, amphotericin B like precursors and a variety of nitrogen ligand donors. This chain is Cytochrome P450 CYP105Q4, found in Mycobacterium marinum (strain ATCC BAA-535 / M).